A 250-amino-acid chain; its full sequence is Pyrroloquinoline-quinone synthase (250 aa).

Belongs to the PqqC family.

It carries out the reaction 6-(2-amino-2-carboxyethyl)-7,8-dioxo-1,2,3,4,7,8-hexahydroquinoline-2,4-dicarboxylate + 3 O2 = pyrroloquinoline quinone + 2 H2O2 + 2 H2O + H(+). The protein operates within cofactor biosynthesis; pyrroloquinoline quinone biosynthesis. Its function is as follows. Ring cyclization and eight-electron oxidation of 3a-(2-amino-2-carboxyethyl)-4,5-dioxo-4,5,6,7,8,9-hexahydroquinoline-7,9-dicarboxylic-acid to PQQ. This Pseudomonas aeruginosa (strain LESB58) protein is Pyrroloquinoline-quinone synthase.